We begin with the raw amino-acid sequence, 767 residues long: ATPase family gene 2 protein homolog B (767 aa).

The residue at position 1 (M1) is an N-acetylmethionine. Residues 241 to 248 and 507 to 514 each bind ATP; these read GPPGVGKT and GPPGCAKT.

This sequence belongs to the AAA ATPase family. AFG2 subfamily. Part of the 55LCC heterohexameric ATPase complex composed at least of AIRIM, AFG2A, AFG2B and CINP. Associates with pre-60S ribosomal particles.

The protein localises to the cytoplasm. It is found in the cytoskeleton. Its subcellular location is the spindle. It localises to the nucleus. It catalyses the reaction ATP + H2O = ADP + phosphate + H(+). In the context of 55LCC heterohexameric ATPase complex, the ATPase activity is stimulated by DNA binding and inhibited in presence of RNA. Functionally, ATP-dependent chaperone part of the 55LCC heterohexameric ATPase complex which is chromatin-associated and promotes replisome proteostasis to maintain replication fork progression and genome stability. Required for replication fork progression, sister chromatid cohesion, and chromosome stability. The ATPase activity is specifically enhanced by replication fork DNA and is coupled to cysteine protease-dependent cleavage of replisome substrates in response to replication fork damage. Uses ATPase activity to process replisome substrates in S-phase, facilitating their proteolytic turnover from chromatin to ensure DNA replication and mitotic fidelity. Plays an essential role in the cytoplasmic maturation steps of pre-60S ribosomal particles by promoting the release of shuttling protein RSL24D1/RLP24 from the pre-ribosomal particles. This Bos taurus (Bovine) protein is ATPase family gene 2 protein homolog B (AFG2B).